We begin with the raw amino-acid sequence, 404 residues long: Cysteine desulfurase IscS (404 aa).

Pyridoxal 5'-phosphate contacts are provided by residues 75 to 76, N155, Q183, and 203 to 205; these read AT and SAH. Position 206 is an N6-(pyridoxal phosphate)lysine (K206). Residue T243 participates in pyridoxal 5'-phosphate binding. The active-site Cysteine persulfide intermediate is C328. A [2Fe-2S] cluster-binding site is contributed by C328.

This sequence belongs to the class-V pyridoxal-phosphate-dependent aminotransferase family. NifS/IscS subfamily. As to quaternary structure, homodimer. Forms a heterotetramer with IscU, interacts with other sulfur acceptors. Pyridoxal 5'-phosphate is required as a cofactor.

The protein localises to the cytoplasm. The enzyme catalyses (sulfur carrier)-H + L-cysteine = (sulfur carrier)-SH + L-alanine. It participates in cofactor biosynthesis; iron-sulfur cluster biosynthesis. Its function is as follows. Master enzyme that delivers sulfur to a number of partners involved in Fe-S cluster assembly, tRNA modification or cofactor biosynthesis. Catalyzes the removal of elemental sulfur atoms from cysteine to produce alanine. Functions as a sulfur delivery protein for Fe-S cluster synthesis onto IscU, an Fe-S scaffold assembly protein, as well as other S acceptor proteins. The sequence is that of Cysteine desulfurase IscS from Pseudomonas entomophila (strain L48).